The sequence spans 426 residues: MAKQIQAVRGMNDCLPGDTQVWQKVENILRETVASFGYQEIRFPIVESTDLFKRSIGEVTDIVEKEMYTFADRNGDLLTLRPEGTAVCVRAGNENGLLYNQEQRLWYMGPMFRHERPQKGRYRQFHQFGLETFGIASADIDAEVILLTAQLWESFGISEHVRLELNSLGSNEARANYRDALVAYLEQHLDVLDEDSKRRMYSNPLRVLDSKNPDVQAILINAPKLSEHLDTESKEHFANLCERLDAAGVKYTINEKLVRGLDYYNRTVFEWITDSLGAQGTVCAGGRYDGLVEQLGGKATPAVGFAMGLERLVLLLQALECVGDIRRNADVYLASMGDKASIQAPIIAATLRRDVPNLRVMVHAGGGNFKKQLKRADKSDALVAVIIGEDELEQGVVTIKYLRERKEQVTLELEQAKALLAELINS.

This sequence belongs to the class-II aminoacyl-tRNA synthetase family. In terms of assembly, homodimer.

It is found in the cytoplasm. The enzyme catalyses tRNA(His) + L-histidine + ATP = L-histidyl-tRNA(His) + AMP + diphosphate + H(+). This is Histidine--tRNA ligase from Pseudoalteromonas translucida (strain TAC 125).